A 227-amino-acid polypeptide reads, in one-letter code: Cytochrome c oxidase subunit 2 (227 aa).

Residues 1-14 (MAHPVQLGLQDATS) lie on the Mitochondrial intermembrane side of the membrane. The chain crosses the membrane as a helical span at residues 15-45 (PVMEELITFHDQALMAMFLISFLILYALSST). Over 46–59 (LTTKLTNTNITDAQ) the chain is Mitochondrial matrix. A helical transmembrane segment spans residues 60–87 (EMETIWTILPAVILILIALPSLRILYMT). The Mitochondrial intermembrane portion of the chain corresponds to 88–227 (DEINNPSFTI…IFEMGPVFTL (140 aa)). Cu cation-binding residues include His-161, Cys-196, Glu-198, Cys-200, His-204, and Met-207. A Mg(2+)-binding site is contributed by Glu-198.

Belongs to the cytochrome c oxidase subunit 2 family. Component of the cytochrome c oxidase (complex IV, CIV), a multisubunit enzyme composed of 14 subunits. The complex is composed of a catalytic core of 3 subunits MT-CO1, MT-CO2 and MT-CO3, encoded in the mitochondrial DNA, and 11 supernumerary subunits COX4I, COX5A, COX5B, COX6A, COX6B, COX6C, COX7A, COX7B, COX7C, COX8 and NDUFA4, which are encoded in the nuclear genome. The complex exists as a monomer or a dimer and forms supercomplexes (SCs) in the inner mitochondrial membrane with NADH-ubiquinone oxidoreductase (complex I, CI) and ubiquinol-cytochrome c oxidoreductase (cytochrome b-c1 complex, complex III, CIII), resulting in different assemblies (supercomplex SCI(1)III(2)IV(1) and megacomplex MCI(2)III(2)IV(2)). Found in a complex with TMEM177, COA6, COX18, COX20, SCO1 and SCO2. Interacts with TMEM177 in a COX20-dependent manner. Interacts with COX20. Interacts with COX16. Cu cation is required as a cofactor.

The protein localises to the mitochondrion inner membrane. It catalyses the reaction 4 Fe(II)-[cytochrome c] + O2 + 8 H(+)(in) = 4 Fe(III)-[cytochrome c] + 2 H2O + 4 H(+)(out). In terms of biological role, component of the cytochrome c oxidase, the last enzyme in the mitochondrial electron transport chain which drives oxidative phosphorylation. The respiratory chain contains 3 multisubunit complexes succinate dehydrogenase (complex II, CII), ubiquinol-cytochrome c oxidoreductase (cytochrome b-c1 complex, complex III, CIII) and cytochrome c oxidase (complex IV, CIV), that cooperate to transfer electrons derived from NADH and succinate to molecular oxygen, creating an electrochemical gradient over the inner membrane that drives transmembrane transport and the ATP synthase. Cytochrome c oxidase is the component of the respiratory chain that catalyzes the reduction of oxygen to water. Electrons originating from reduced cytochrome c in the intermembrane space (IMS) are transferred via the dinuclear copper A center (CU(A)) of subunit 2 and heme A of subunit 1 to the active site in subunit 1, a binuclear center (BNC) formed by heme A3 and copper B (CU(B)). The BNC reduces molecular oxygen to 2 water molecules using 4 electrons from cytochrome c in the IMS and 4 protons from the mitochondrial matrix. In Papio anubis (Olive baboon), this protein is Cytochrome c oxidase subunit 2 (MT-CO2).